We begin with the raw amino-acid sequence, 247 residues long: Triosephosphate isomerase (247 aa).

Residue 8-10 coordinates substrate; it reads NWK. H95 (electrophile) is an active-site residue. Residue E162 is the Proton acceptor of the active site. Substrate is bound by residues G168 and S207.

The protein belongs to the triosephosphate isomerase family. In terms of assembly, homodimer.

The protein resides in the cytoplasm. The catalysed reaction is D-glyceraldehyde 3-phosphate = dihydroxyacetone phosphate. Its pathway is carbohydrate biosynthesis; gluconeogenesis. It participates in carbohydrate degradation; glycolysis; D-glyceraldehyde 3-phosphate from glycerone phosphate: step 1/1. Functionally, involved in the gluconeogenesis. Catalyzes stereospecifically the conversion of dihydroxyacetone phosphate (DHAP) to D-glyceraldehyde-3-phosphate (G3P). This chain is Triosephosphate isomerase, found in Gluconacetobacter diazotrophicus (strain ATCC 49037 / DSM 5601 / CCUG 37298 / CIP 103539 / LMG 7603 / PAl5).